Consider the following 115-residue polypeptide: Guanylin (115 aa).

The signal sequence occupies residues 1–23 (MNAWLLSVLCLLGALAVLVEGVT). Residues 24–100 (VQDGDLSFPL…LQRLEAIAQD (77 aa)) constitute a propeptide that is removed on maturation. 3 disulfide bridges follow: Cys-69–Cys-82, Cys-104–Cys-112, and Cys-107–Cys-115.

This sequence belongs to the guanylin family. As to expression, intestine and in low abundance in adrenal gland, kidney, and uterus/oviduct.

Its subcellular location is the secreted. Endogenous activator of intestinal guanylate cyclase. It stimulates this enzyme through the same receptor binding region as the heat-stable enterotoxins. The polypeptide is Guanylin (Guca2a) (Rattus norvegicus (Rat)).